The primary structure comprises 217 residues: Protein canopy 4 (217 aa).

The N-terminal stretch at 1 to 27 (MEMFTVFLFYMFSLVLANQEERLPNKC) is a signal peptide. 3 cysteine pairs are disulfide-bonded: Cys-27–Cys-185, Cys-30–Cys-173, and Cys-83–Cys-145. A disordered region spans residues 194-217 (MGMKGSEEESEGKDGKETHDAGEL). Residues 205 to 217 (GKDGKETHDAGEL) show a composition bias toward basic and acidic residues.

It belongs to the canopy family.

The protein localises to the secreted. The chain is Protein canopy 4 (cnpy4) from Danio rerio (Zebrafish).